The chain runs to 624 residues: Ceramide transfer protein (624 aa).

Over residues 1-11 (MSDNQSWNSSG) the composition is skewed to polar residues. Residues 1–24 (MSDNQSWNSSGSEEDPETESGPPV) form a disordered region. The PH domain maps to 23 to 117 (PVERCGVLSK…WIDAIEQHKT (95 aa)). Residue Ser126 is modified to Phosphoserine. Ser132 bears the Phosphoserine; by PKD mark. Ser135 carries the phosphoserine modification. Residues 263–303 (IELMVKREDSWQKRLDKETEKKRRTEEAYKNAMTELKKKSH) adopt a coiled-coil conformation. Residue Ser315 is modified to Phosphoserine. Positions 321-327 (EFFDAVE) match the FFAT motif. Position 372 is a phosphotyrosine (Tyr372). 3 positions are modified to phosphoserine: Ser373, Ser377, and Ser380. The START domain maps to 389-618 (DVHRFSSQVE…FTSYVQEKTA (230 aa)). An N-acylsphing-4-enine-binding residues include Glu472, Gln493, Asn530, and Tyr579.

Interacts with VAPA and VAPB. Interaction with VAPB is less efficient than with VAPA. Interacts (via FFAT motif) with the MOSPD2 (via MSP domain). In terms of processing, phosphorylation on Ser-132 decreases the affinity toward phosphatidylinositol 4-phosphate at Golgi membranes and reduces ceramide transfer activity. Inactivated by hyperphosphorylation of serine residues by CSNK1G2/CK1 that triggers dissociation from the Golgi complex, thus down-regulating ER-to-Golgi transport of ceramide and sphingomyelin synthesis.

The protein localises to the cytoplasm. The protein resides in the golgi apparatus. It is found in the endoplasmic reticulum. It catalyses the reaction N-hexadecanoylsphing-4-enine(in) = N-hexadecanoylsphing-4-enine(out). In terms of biological role, shelters ceramides and diacylglycerol lipids inside its START domain and mediates the intracellular trafficking of ceramides and diacylglycerol lipids in a non-vesicular manner. The sequence is that of Ceramide transfer protein (CERT1) from Pongo abelii (Sumatran orangutan).